The following is a 478-amino-acid chain: Tubulin gamma chain (478 aa).

141–147 contacts GTP; the sequence is AGGTGSG. The disordered stretch occupies residues 451–478; it reads ISQKESSSLANENGNGANNKPGKSAMAL. The span at 459–468 shows a compositional bias: polar residues; that stretch reads LANENGNGAN.

This sequence belongs to the tubulin family.

It is found in the cytoplasm. The protein resides in the cytoskeleton. Its subcellular location is the microtubule organizing center. It localises to the centrosome. Its function is as follows. Tubulin is the major constituent of microtubules. The gamma chain is found at microtubule organizing centers (MTOC) such as the spindle poles or the centrosome, suggesting that it is involved in the minus-end nucleation of microtubule assembly. This chain is Tubulin gamma chain, found in Reticulomyxa filosa.